We begin with the raw amino-acid sequence, 379 residues long: 1-deoxy-D-xylulose 5-phosphate reductoisomerase (379 aa).

Residues Thr10, Gly11, Ser12, Ile13, Arg38, Asn39, and Asn121 each coordinate NADPH. 1-deoxy-D-xylulose 5-phosphate is bound at residue Lys122. Residue Glu123 coordinates NADPH. Asp147 contributes to the Mn(2+) binding site. Positions 148, 149, 173, and 196 each coordinate 1-deoxy-D-xylulose 5-phosphate. A Mn(2+)-binding site is contributed by Glu149. NADPH is bound at residue Gly202. 4 residues coordinate 1-deoxy-D-xylulose 5-phosphate: Ser209, Asn214, Lys215, and Glu218. Glu218 is a Mn(2+) binding site.

The protein belongs to the DXR family. Mg(2+) serves as cofactor. Requires Mn(2+) as cofactor.

It carries out the reaction 2-C-methyl-D-erythritol 4-phosphate + NADP(+) = 1-deoxy-D-xylulose 5-phosphate + NADPH + H(+). The protein operates within isoprenoid biosynthesis; isopentenyl diphosphate biosynthesis via DXP pathway; isopentenyl diphosphate from 1-deoxy-D-xylulose 5-phosphate: step 1/6. Catalyzes the NADPH-dependent rearrangement and reduction of 1-deoxy-D-xylulose-5-phosphate (DXP) to 2-C-methyl-D-erythritol 4-phosphate (MEP). The polypeptide is 1-deoxy-D-xylulose 5-phosphate reductoisomerase (Chlamydia muridarum (strain MoPn / Nigg)).